Consider the following 95-residue polypeptide: Integration host factor subunit beta (95 aa).

Belongs to the bacterial histone-like protein family. As to quaternary structure, heterodimer of an alpha and a beta chain.

In terms of biological role, this protein is one of the two subunits of integration host factor, a specific DNA-binding protein that functions in genetic recombination as well as in transcriptional and translational control. In Psychromonas ingrahamii (strain DSM 17664 / CCUG 51855 / 37), this protein is Integration host factor subunit beta.